The chain runs to 1705 residues: Rho guanine nucleotide exchange factor 28 (1705 aa).

Disordered stretches follow at residues 287–316 (RPEE…SAAE) and 473–524 (KKRS…ETNT). Ser313 and Ser478 each carry phosphoserine. Residues 501 to 510 (PGSQSSSRTG) show a composition bias toward polar residues. A Phosphoserine modification is found at Ser624. Positions 630–649 (MTSPRNKSKTKSKDAKDKEK) are disordered. Residues 640 to 649 (KSKDAKDKEK) are compositionally biased toward basic and acidic residues. The Phorbol-ester/DAG-type zinc finger occupies 652–699 (RHQFAPGTFSGVLQCLVCDKTLLGKESLQCSNCNANVHKGCKDAAPAC). Polar residues-rich tracts occupy residues 710 to 721 (NKPQTILGNSSF) and 759 to 775 (VPGT…TSLE). The segment at 710 to 800 (NKPQTILGNS…ELLQSMGSSP (91 aa)) is disordered. Basic and acidic residues predominate over residues 777–791 (ESDHNSCRSRSHSDE). Residues 849-1044 (KRQDVIFELM…KDMIATVDLK (196 aa)) form the DH domain. Residues 1086–1188 (TLLYDGLVYW…WMRRIQQAVE (103 aa)) form the PH domain. Positions 1187-1207 (VESCPEEKGGRTSESDEDKRK) are disordered. Residues 1191–1207 (PEEKGGRTSESDEDKRK) are compositionally biased toward basic and acidic residues. Residues 1295–1304 (AVSQSCEDSC) are interaction with PTK2/FAK1; required for regulation of axonal branching and synapse formation. Residues 1312-1339 (TLSSHDVPGSPTASLVTGGREGRGCSDV) are disordered. Residues 1372–1383 (IIQAIQNLTRLL) are mediates cytoplasmic retention and interaction with YWHAH. The segment at 1425-1705 (QKSRDADRQH…DGAKENIVYL (281 aa)) is interaction with microtubules. Residues 1488–1525 (RSRGELDLQLQEYQHSLERLREGQRLVEREQARMRAQQ) adopt a coiled-coil conformation. Residues 1496–1527 (QLQEYQHSLERLREGQRLVEREQARMRAQQSL) are RNA-binding. Ser1538 is subject to Phosphoserine. The segment at 1566-1579 (FINEALVQMSFNTF) is mediates cytoplasmic retention and interaction with MAPK8IP1. A disordered region spans residues 1638–1705 (PFHESSKDSC…DGAKENIVYL (68 aa)). Residues 1641 to 1655 (ESSKDSCKNDLDTSH) are compositionally biased toward basic and acidic residues. Over residues 1656–1669 (TESPTPHDSNSHRP) the composition is skewed to polar residues. A compositionally biased stretch (basic and acidic residues) spans 1688–1699 (TRQDGETGDGAK).

In terms of assembly, homooligomer; forms cytoplasmic aggregates. Forms a complex with MAPK8 and MAPK8IP1. Interacts with RHOA. Interacts with microtubules. Interacts with YWHAE and YWHAH. Interacts with PTK2/FAK1. Interacts with NEFL. Interacts with CTNND2; prevents interaction with RHOA. In terms of processing, phosphorylated on tyrosine upon stimulation of cells by laminin.

The protein resides in the cytoplasm. It localises to the cell membrane. Functions as a RHOA-specific guanine nucleotide exchange factor regulating signaling pathways downstream of integrins and growth factor receptors. Functions in axonal branching, synapse formation and dendritic morphogenesis. Also functions in focal adhesion formation, cell motility and B-lymphocytes activation. May regulate NEFL expression and aggregation and play a role in apoptosis. The protein is Rho guanine nucleotide exchange factor 28 (ARHGEF28) of Homo sapiens (Human).